Reading from the N-terminus, the 91-residue chain is uncharacterized protein (91 aa).

This is an uncharacterized protein from Kluyveromyces lactis (strain ATCC 8585 / CBS 2359 / DSM 70799 / NBRC 1267 / NRRL Y-1140 / WM37) (Yeast).